The primary structure comprises 370 residues: L-selectin (370 aa).

The N-terminal stretch at 1 to 28 is a signal peptide; sequence MLCPWKCQNAQRGLWNVFKLWVWIMLCC. A propeptide spanning residues 29-38 is cleaved from the precursor; sequence DFFAHHGTDC. Residues 39 to 333 are Extracellular-facing; the sequence is WTYHYSKRPM…SINEESDYNP (295 aa). The region spanning 55 to 155 is the C-type lectin domain; that stretch reads AFCRENYTDL…ACHKAKTALC (101 aa). Cystine bridges form between C57–C155, C128–C147, C128–C160, C160–C171, C165–C180, C182–C191, C197–C241, C227–C254, C259–C303, and C289–C316. N-linked (GlcNAc...) asparagine glycans are attached at residues N60, N77, and N104. Ca(2+) is bound by residues E118, N120, E126, N143, and D144. An EGF-like domain is found at 156-192; sequence YTASCKPWSCSGHGQCVEVINNYTCNCDLGYYGPECQ. N177 carries an N-linked (GlcNAc...) asparagine glycan. Sushi domains are found at residues 195-256 and 257-318; these read TQCV…TCRV and IQCE…RCQK. Residues N216, N226, and N246 are each glycosylated (N-linked (GlcNAc...) asparagine). N-linked (GlcNAc...) asparagine glycosylation is found at N308 and N320. Residues 334-354 form a helical membrane-spanning segment; that stretch reads LFIPVAVMVTAFSGLAFIIWL. At 355–370 the chain is on the cytoplasmic side; the sequence is ARRLKRKSKKVSEKHG.

This sequence belongs to the selectin/LECAM family. In terms of assembly, interaction with SELPLG/PSGL1 and PODXL2 is required for promoting recruitment and rolling of leukocytes. This interaction is dependent on the sialyl Lewis X glycan modification of SELPLG and PODXL2, and tyrosine sulfation modifications of SELPLG. Sulfation on 'Tyr-51' of SELPLG is important for L-selectin binding. In terms of processing, N-glycosylated. As to expression, highly expressed in lymphocytes from peripheral lymph nodes. Low in lymphocytes isolated from Peyer patches.

The protein resides in the cell membrane. Functionally, calcium-dependent lectin that mediates cell adhesion by binding to glycoproteins on neighboring cells. Mediates the adherence of lymphocytes to endothelial cells of high endothelial venules in peripheral lymph nodes. Promotes initial tethering and rolling of leukocytes in endothelia. The polypeptide is L-selectin (SELL) (Bos taurus (Bovine)).